Consider the following 339-residue polypeptide: 1-aminocyclopropane-1-carboxylate deaminase (339 aa).

Residue K52 is modified to N6-(pyridoxal phosphate)lysine. S79 (nucleophile) is an active-site residue.

This sequence belongs to the ACC deaminase/D-cysteine desulfhydrase family. As to quaternary structure, homotrimer. Requires pyridoxal 5'-phosphate as cofactor.

The catalysed reaction is 1-aminocyclopropane-1-carboxylate + H2O = 2-oxobutanoate + NH4(+). Functionally, catalyzes a cyclopropane ring-opening reaction, the irreversible conversion of 1-aminocyclopropane-1-carboxylate (ACC) to ammonia and alpha-ketobutyrate. Allows growth on ACC as a nitrogen source. The protein is 1-aminocyclopropane-1-carboxylate deaminase of Bradyrhizobium sp. (strain BTAi1 / ATCC BAA-1182).